The following is a 126-amino-acid chain: S-adenosylmethionine decarboxylase proenzyme (126 aa).

The Schiff-base intermediate with substrate; via pyruvic acid role is filled by serine 63. At serine 63 the chain carries Pyruvic acid (Ser); by autocatalysis. Histidine 68 (proton acceptor; for processing activity) is an active-site residue. Cysteine 83 acts as the Proton donor; for catalytic activity in catalysis.

This sequence belongs to the prokaryotic AdoMetDC family. Type 1 subfamily. In terms of assembly, heterotetramer of two alpha and two beta chains arranged as a dimer of alpha/beta heterodimers. Requires pyruvate as cofactor. In terms of processing, is synthesized initially as an inactive proenzyme. Formation of the active enzyme involves a self-maturation process in which the active site pyruvoyl group is generated from an internal serine residue via an autocatalytic post-translational modification. Two non-identical subunits are generated from the proenzyme in this reaction, and the pyruvate is formed at the N-terminus of the alpha chain, which is derived from the carboxyl end of the proenzyme. The post-translation cleavage follows an unusual pathway, termed non-hydrolytic serinolysis, in which the side chain hydroxyl group of the serine supplies its oxygen atom to form the C-terminus of the beta chain, while the remainder of the serine residue undergoes an oxidative deamination to produce ammonia and the pyruvoyl group blocking the N-terminus of the alpha chain.

It catalyses the reaction S-adenosyl-L-methionine + H(+) = S-adenosyl 3-(methylsulfanyl)propylamine + CO2. It participates in amine and polyamine biosynthesis; S-adenosylmethioninamine biosynthesis; S-adenosylmethioninamine from S-adenosyl-L-methionine: step 1/1. In terms of biological role, catalyzes the decarboxylation of S-adenosylmethionine to S-adenosylmethioninamine (dcAdoMet), the propylamine donor required for the synthesis of the polyamines spermine and spermidine from the diamine putrescine. This chain is S-adenosylmethionine decarboxylase proenzyme, found in Clostridium kluyveri (strain NBRC 12016).